Here is a 181-residue protein sequence, read N- to C-terminus: MTTSCSSQVRQNYHQDSEAAINRQINLELYASYVYLSMSYYFDRDDVALKNFAKYFLHQSHGGRGHAEKLMKLQTQRGARIFLQDIMKPERDDWENGLTAMEFALHVVKNVYQSLLELHKLATDKNDPHLCDFIETHYLHEQVKAIKELGDHITNLHRMGAPEYGMAEYLFDKHTLGSSES.

Position 1 is an N-acetylmethionine (Met1). The residue at position 2 (Thr2) is an N-acetylthreonine; in Ferritin heavy chain, N-terminally processed. The Ferritin-like diiron domain occupies 11-160 (QNYHQDSEAA…DHITNLHRMG (150 aa)). Ser179 is modified (phosphoserine).

It belongs to the ferritin family. As to quaternary structure, oligomer of 24 subunits. There are two types of subunits: L (light) chain and H (heavy) chain. The major chain can be light or heavy, depending on the species and tissue type. The functional molecule forms a roughly spherical shell with a diameter of 12 nm and contains a central cavity into which the insoluble mineral iron core is deposited. Interacts with NCOA4; NCOA4 promotes targeting of the iron-binding ferritin complex to autolysosomes following starvation or iron depletion. In terms of assembly, (Microbial infection) Interacts with classical swine fever virus protein NS4B. (Microbial infection) Interacts with Porcine circovirus 2 ORF4 protein.

Its subcellular location is the cytoplasm. The protein resides in the lysosome. It is found in the cytoplasmic vesicle. It localises to the autophagosome. The enzyme catalyses 4 Fe(2+) + O2 + 4 H(+) = 4 Fe(3+) + 2 H2O. Stores iron in a soluble, non-toxic, readily available form. Important for iron homeostasis. Has ferroxidase activity. Iron is taken up in the ferrous form and deposited as ferric hydroxides after oxidation. Also plays a role in delivery of iron to cells. Mediates iron uptake in capsule cells of the developing kidney. Delivery to lysosomes is mediated by the cargo receptor NCOA4 for autophagic degradation and release of iron. Its function is as follows. (Microbial infection) Is unable to assume its function upon interaction with viral proteins, thereby increasing Fe concentration in the cytoplasm. This would inhibit the accumulation of reactive oxygen in host cells, leading to reduced apoptosis and increasing the survival of virus infected cell. The chain is Ferritin heavy chain (FTH1) from Sus scrofa (Pig).